The primary structure comprises 187 residues: High affinity copper uptake protein 1 (187 aa).

Over 1–65 (MRMNHMEMHH…SSLVINTPGE (65 aa)) the chain is Extracellular. The Bis-His motif signature appears at 9 to 10 (HH). The N-linked (GlcNAc...) asparagine glycan is linked to N19. Residue T30 is glycosylated (O-linked (GalNAc...) threonine). The chain crosses the membrane as a helical span at residues 66–86 (MAGAFVAVFLLAMFYEGLKIA). Over 87–129 (REGLLRKSQVSIRYNSMPVPGPNGTILMETHKTVGQQMLSFPH) the chain is Cytoplasmic. At T111 the chain carries Phosphothreonine. A helical membrane pass occupies residues 130-150 (LLQTVLHIIQVVISYFLMLIF). Over 151–153 (MTY) the chain is Extracellular. Residues 154–174 (NGYLCIAVAAGAGTGYFLFSW) traverse the membrane as a helical segment. The Cytoplasmic segment spans residues 175 to 187 (KKAVVVDITEHCH). At C186 the chain carries Cysteine sulfenic acid (-SOH).

It belongs to the copper transporter (Ctr) (TC 1.A.56) family. SLC31A subfamily. In terms of assembly, homotrimer; is stabilized by cisplatin via interactions between cisplatin and the methionine-rich clusters, and could be crucial for the copper(2+) reduction process and copper(1+) stabilization. Heterotrimer between SLC31A1, CCS and SOD1; this heterotrimer is copper(1+)-mediated and its maintenance is regulated through SOD1 activation. Interacts with KDR; this interaction is induced upon VEGFA stimulation leading to SLC31A1 and KDR subsequent co-internalization to early endosomes, thereby activating KDR downstream signaling in endothelial cells. Interacts (via C-terminal domain) with ATOX1 (via dimer form); this interaction improves ATOX1 stability and controls intracellular copper(1+) levels. Interacts with SLC31A2; this interaction stabilizes SLC31A2 and protects its from ubiquitination and degradation. Interacts (via C-terminal domain) with CCS; this interaction is copper(1+)-mediated. O-Glycosylation at Thr-30 protects from proteolytic cleavage in the N-terminal extracellular domain. In terms of processing, proteolytic cleavage, leading to a truncated form, is facilitated by SLC31A2 and initiated preferentially by CTSL and to a minor extend by CTSB in endolysosomal compartments. A post-CTSL/cathepsin L processing occurs to yield to the fully truncated form. Post-translationally, sulfenylated at Cys-186 after stimulation with VEGFA, which induces SLC31A1-KDR disulfide bond formation and their co-internalization to early endosomes, driving to a sustained VEGFR2 signaling.

It is found in the cell membrane. The protein localises to the early endosome membrane. Its subcellular location is the recycling endosome membrane. It localises to the apical cell membrane. The protein resides in the late endosome membrane. It is found in the basolateral cell membrane. It carries out the reaction Cu(+)(out) = Cu(+)(in). It catalyses the reaction Ag(+)(out) = Ag(+)(in). Copper uptake is inhibited by cold temperature, silver and zinc ions. Platinum-containing chemotherapeutic agents uptake is inhibited by cold temperature and copper. Functionally, uniporter that mediates the transport of copper(1+) from the extracellular space to the cytoplasm, across the plasma membrane. Then, delivers directly copper(1+) to specific chaperone such as ATOX1, via a copper(1+)- mediated transient interaction between the C-terminal domain and a copper(1+) chaperone, thus controlling intracellular copper(1+) levels. May function in copper(1+) import from the apical membrane thus may drive intestinal copper absorption. The copper(1+) transport mechanism is sodium-independent, saturable and of high-affinity. Also mediates the uptake of silver(1+). May function in the influx of the platinum-containing chemotherapeutic agents. The platinum-containing chemotherapeutic agents uptake is saturable. Also participates in the first step of copper(2+) acquisition by cells through a direct transfer of copper(2+) from copper(2+) carriers in blood, such as ALB to the N-terminal domain of SLC31A1, leading to copper(2+) reduction and probably followed by copper(1+) stabilization. In addition, functions as a redox sensor to promote angiogenesis in endothelial cells, in a copper(1+) transport independent manner, by transmitting the VEGF-induced ROS signal through a sulfenylation at Cys-189 leading to a subsequent disulfide bond formation between SLC31A1 and KDR. The SLC31A1-KDR complex is then co-internalized to early endosomes, driving a sustained VEGFR2 signaling. Mobilizes copper(1+) out of the endosomal compartment, making copper(1+) available for export out of the cells. The chain is High affinity copper uptake protein 1 from Rattus norvegicus (Rat).